Consider the following 395-residue polypeptide: MAKKVALAYSGGLDTSVCIPILKEKYGYDEVVTISVDVGQPEEEIKRADAKAEKISNKHYTIDAKEEFVKDYVFPLIKANGSYEGYVMGTSIARPLIAKKVVEAARKEGAVALAHGCTGKGNDQLRFEAVFRQTDMDVIAPMREMNLTREWEIDYAKEHGIPVEVTKSKPWSVDENIWSRSIEGGRLEDPSFVPPEEIFEWTTSPEKTPEQPRIVDIGFEAGVPVSLDGEKMSGYALVKKMNEIAGENGVGRTDMIEDRVLGLKARENYEHPAATVLLAAHADLEKLVLTRSELKFKKIVDDQWSELAYYGLVDEPLYADLNAFIDKSQERVTGTVKVRLYKGALTILSRSSPNALYSEDLVSFDSQTIDQKDSEGFAKYHGFQARMYRKVMDKQ.

Position 8–16 (8–16 (AYSGGLDTS)) interacts with ATP. 2 residues coordinate L-citrulline: Y86 and S91. Residue G116 coordinates ATP. L-aspartate is bound by residues T118, N122, and D123. Residue N122 coordinates L-citrulline. L-citrulline-binding residues include R126, S172, S181, E257, and Y269.

It belongs to the argininosuccinate synthase family. Type 1 subfamily. In terms of assembly, homotetramer.

The protein localises to the cytoplasm. The catalysed reaction is L-citrulline + L-aspartate + ATP = 2-(N(omega)-L-arginino)succinate + AMP + diphosphate + H(+). The protein operates within amino-acid biosynthesis; L-arginine biosynthesis; L-arginine from L-ornithine and carbamoyl phosphate: step 2/3. This Methanosarcina barkeri (strain Fusaro / DSM 804) protein is Argininosuccinate synthase.